Consider the following 148-residue polypeptide: UPF0260 protein YPK_2117 (148 aa).

The protein belongs to the UPF0260 family.

The sequence is that of UPF0260 protein YPK_2117 from Yersinia pseudotuberculosis serotype O:3 (strain YPIII).